The primary structure comprises 993 residues: Testis-expressed protein 13C (993 aa).

3 disordered regions span residues 281–381 (QEET…SLKK), 520–547 (DSKSHRMKKDPVMPQKMVPLGDSRSHSL), and 894–959 (FSKS…PVNW). Residues 325–335 (GMTSQGDSSSH) are compositionally biased toward polar residues. Residues 353–364 (SRSHSLEKKPVM) show a composition bias toward basic and acidic residues. The span at 944–957 (ESQQQKPASCSSPV) shows a compositional bias: polar residues. The RanBP2-type zinc-finger motif lies at 955–984 (SPVNWACPWCNAMNFPRNKVCSKCKRVRMP).

The protein belongs to the TEX13 family.

This Homo sapiens (Human) protein is Testis-expressed protein 13C.